The chain runs to 130 residues: MVRMNVLAAALRCICNAEKRCKRQVLIRPCSKVTIKFLMVMIKHGYIGEFEVVDDHRGGKIIVNLNGRLNKCGVISPRFDVPINDMEKWTSNLLPSRQFGYVVLTTSGGIMDHEEARRKHVGGKILGFFF.

Belongs to the universal ribosomal protein uS8 family.

The protein is Small ribosomal subunit protein uS8 (RPS15A) of Paracentrotus lividus (Common sea urchin).